A 705-amino-acid chain; its full sequence is MARDYPLDRYRNFGIMAHIDAGKTTCSERILYYTGKSHNIGEVHDGAATMDWMEQEQERGITITSAATTTFWERTEDGETADTPKHRLNIIDTPGHVDFTIEVERSLAVLDGAVCVLDANAGVEPQTETVWRQADRYKVPRIVFVNKMDKIGADFFNCVHMIEDRTGARAVPVAIPIGSENELEGLVDLVTMQEWVYKGDDLGASWVKGEIRDSLKDVCEEWRGKMIEAAVEEDDDAMMEYLEGNEPDVPTLRALLRKGTLALHFVPVLGGSAFKNKGVQPLLNAVIDYLPSPLDVVDYMGFAPGDENEERNIPRRADDDMPFSGLAFKIMNDPFVGSLTFTRIYSGTMNKGDTVLNSTKGKKERIGRMMMMHSNNREEIEEAFAGDIIALAGLKDTTTGDTLCDVKEPVVLETMTFPDPVIEIAVEPKTKNDQEKMSQGLARLAAEDPSFRVETDIESGQTIMKGMGELHLDILVDRLKREFKVEANIGAPQVAYRETIGHEVEHTYTHKKQSGGSGQFAEVKLVISPTEPGEGYSFESKIVGGAVPKEYIPGVEKGIKSVMDSGPLAGFPVIDFKVALVDGKFHDVDSSVLAFEIAARMGMREGMKKAGAKLLEPVMKVEVVTPEEYTGGIIGDLTSRRGQVTGQEPRGNAVAINAFVPLANMFGYINTLRSMSSGRAQFTMQFDHYDPVPANISQEIQEKFA.

A tr-type G domain is found at 8-294 (DRYRNFGIMA…AVIDYLPSPL (287 aa)). GTP-binding positions include 17-24 (AHIDAGKT), 92-96 (DTPGH), and 146-149 (NKMD).

The protein belongs to the TRAFAC class translation factor GTPase superfamily. Classic translation factor GTPase family. EF-G/EF-2 subfamily.

It localises to the cytoplasm. Its function is as follows. Catalyzes the GTP-dependent ribosomal translocation step during translation elongation. During this step, the ribosome changes from the pre-translocational (PRE) to the post-translocational (POST) state as the newly formed A-site-bound peptidyl-tRNA and P-site-bound deacylated tRNA move to the P and E sites, respectively. Catalyzes the coordinated movement of the two tRNA molecules, the mRNA and conformational changes in the ribosome. The chain is Elongation factor G from Dinoroseobacter shibae (strain DSM 16493 / NCIMB 14021 / DFL 12).